The sequence spans 100 residues: Putative pterin-4-alpha-carbinolamine dehydratase (100 aa).

It belongs to the pterin-4-alpha-carbinolamine dehydratase family.

It carries out the reaction (4aS,6R)-4a-hydroxy-L-erythro-5,6,7,8-tetrahydrobiopterin = (6R)-L-erythro-6,7-dihydrobiopterin + H2O. The polypeptide is Putative pterin-4-alpha-carbinolamine dehydratase (Afipia carboxidovorans (strain ATCC 49405 / DSM 1227 / KCTC 32145 / OM5) (Oligotropha carboxidovorans)).